The sequence spans 436 residues: 3-ketoacyl-CoA thiolase (436 aa).

The active-site Acyl-thioester intermediate is the Cys99. Catalysis depends on proton acceptor residues His392 and Cys422.

The protein belongs to the thiolase-like superfamily. Thiolase family. In terms of assembly, heterotetramer of two alpha chains (FadJ) and two beta chains (FadI).

It is found in the cytoplasm. It carries out the reaction an acyl-CoA + acetyl-CoA = a 3-oxoacyl-CoA + CoA. Its pathway is lipid metabolism; fatty acid beta-oxidation. Functionally, catalyzes the final step of fatty acid oxidation in which acetyl-CoA is released and the CoA ester of a fatty acid two carbons shorter is formed. In Salmonella heidelberg (strain SL476), this protein is 3-ketoacyl-CoA thiolase.